The chain runs to 190 residues: Adenine phosphoribosyltransferase (190 aa).

This sequence belongs to the purine/pyrimidine phosphoribosyltransferase family. Homodimer.

It is found in the cytoplasm. It carries out the reaction AMP + diphosphate = 5-phospho-alpha-D-ribose 1-diphosphate + adenine. It functions in the pathway purine metabolism; AMP biosynthesis via salvage pathway; AMP from adenine: step 1/1. Its function is as follows. Catalyzes a salvage reaction resulting in the formation of AMP, that is energically less costly than de novo synthesis. This chain is Adenine phosphoribosyltransferase, found in Cupriavidus necator (strain ATCC 17699 / DSM 428 / KCTC 22496 / NCIMB 10442 / H16 / Stanier 337) (Ralstonia eutropha).